A 369-amino-acid chain; its full sequence is Protein arginine N-methyltransferase 1-A (369 aa).

An SAM-dependent MTase PRMT-type domain is found at Lys48–Arg369. S-adenosyl-L-methionine contacts are provided by His61, Arg70, Gly94, Glu116, and Glu145. Residues Glu160 and Glu169 contribute to the active site.

It belongs to the class I-like SAM-binding methyltransferase superfamily. Protein arginine N-methyltransferase family. Homodimer. Homooctamer; individual homodimers associates to form a homooctamer and homooligomerization is required for proper localization to the cell membrane. Individual homodimers can associate to form a homohexamer. Component of a complex with lsm14a/rap55a. Interacts with cirbp.

It localises to the nucleus. The protein resides in the nucleoplasm. The protein localises to the cytoplasm. It is found in the cytosol. It carries out the reaction L-arginyl-[protein] + 2 S-adenosyl-L-methionine = N(omega),N(omega)-dimethyl-L-arginyl-[protein] + 2 S-adenosyl-L-homocysteine + 2 H(+). It catalyses the reaction L-arginyl-[protein] + S-adenosyl-L-methionine = N(omega)-methyl-L-arginyl-[protein] + S-adenosyl-L-homocysteine + H(+). The catalysed reaction is N(omega)-methyl-L-arginyl-[protein] + S-adenosyl-L-methionine = N(omega),N(omega)-dimethyl-L-arginyl-[protein] + S-adenosyl-L-homocysteine + H(+). Arginine methyltransferase that methylates (mono and asymmetric dimethylation) the guanidino nitrogens of arginyl residues present in target proteins. Constitutes the main enzyme that mediates monomethylation and asymmetric dimethylation of histone H4 'Arg-4' (H4R3me1 and H4R3me2a, respectively), a specific tag for epigenetic transcriptional activation. Methylates cirbp to regulate its subcellular location. Acts transiently during metamorphosis as a transcription coactivator, enhancing thyroid hormone (T3) receptor (TR)-mediated transcription by enhancing TR binding to the T3 response element (TRE), and histone modification through recruitment of other coactivators. The protein is Protein arginine N-methyltransferase 1-A (prmt1-a) of Xenopus laevis (African clawed frog).